The sequence spans 345 residues: Serine/threonine-protein kinase US3 homolog (345 aa).

The region spanning 49-334 is the Protein kinase domain; that stretch reads FSVLETFTPG…KALLDFAAFY (286 aa). ATP-binding positions include 55–63 and K78; that span reads FTPGAEGFT. The Proton acceptor role is filled by D162.

The protein belongs to the protein kinase superfamily. Ser/Thr protein kinase family. In terms of processing, phosphorylated by UL13 homolog; this phosphorylation regulates subsequent phosphorylation of UL31 and UL34 homologs by US3. Autophosphorylated.

It localises to the host cytoplasm. It is found in the host nucleus. The catalysed reaction is L-seryl-[protein] + ATP = O-phospho-L-seryl-[protein] + ADP + H(+). It catalyses the reaction L-threonyl-[protein] + ATP = O-phospho-L-threonyl-[protein] + ADP + H(+). In terms of biological role, multifunctional serine/threonine kinase that plays a role in several processes including egress of virus particles from the nucleus, modulation of the actin cytoskeleton and inhibition of apoptosis. Phosphorylates UL31 and UL34 homologs, two critical regulators of capsid budding from nucleus to endoplasmic reticulum, thereby facilitating virion egress. Modulates and redistributes host components of the nuclear envelope, including LMNA, emerin/EMD and the nuclear matrix protein MATR3. Phosphorylates envelope glycoprotein B (gB), probably to direct it to the cell surface. Promotes virus intracellular spread by restructuring host cell cytoskeleton. Blocks host apoptosis to extend cell survival and allow efficient viral replication. Promotes viral gene expression by phosphorylating host HDAC2 to reduce viral genome silencing. This is Serine/threonine-protein kinase US3 homolog (US2) from Chlorocebus aethiops (Green monkey).